Consider the following 39-residue polypeptide: Histone H2A (39 aa).

A compositionally biased stretch (basic residues) spans 1 to 18 (AGRGKQGGKVRAKAKTRS). Residues 1 to 24 (AGRGKQGGKVRAKAKTRSSRAGLQ) are disordered. N6-(2-hydroxyisobutyryl)lysine is present on Lys-5. At Lys-5 the chain carries N6-acetyllysine. The residue at position 9 (Lys-9) is an N6-(2-hydroxyisobutyryl)lysine; alternate. Lys-9 is modified (N6-lactoyllysine; alternate). Lys-9 bears the N6-succinyllysine mark. Residues Lys-13 and Lys-15 each participate in a glycyl lysine isopeptide (Lys-Gly) (interchain with G-Cter in ubiquitin) cross-link. Residue Lys-36 is modified to N6-(2-hydroxyisobutyryl)lysine; alternate.

The protein belongs to the histone H2A family. The nucleosome is a histone octamer containing two molecules each of H2A, H2B, H3 and H4 assembled in one H3-H4 heterotetramer and two H2A-H2B heterodimers. The octamer wraps approximately 147 bp of DNA. In terms of processing, monoubiquitination of C-terminus gives a specific tag for epigenetic transcriptional repression. Following DNA double-strand breaks (DSBs), it is ubiquitinated through 'Lys-63' linkage of ubiquitin moieties.

Its subcellular location is the nucleus. The protein resides in the chromosome. In terms of biological role, core component of nucleosome. Nucleosomes wrap and compact DNA into chromatin, limiting DNA accessibility to the cellular machineries which require DNA as a template. Histones thereby play a central role in transcription regulation, DNA repair, DNA replication and chromosomal stability. DNA accessibility is regulated via a complex set of post-translational modifications of histones, also called histone code, and nucleosome remodeling. Its function is as follows. Buforins are strong antimicrobial activities in vitro against a broad-spectrum of microorganisms including fungi. Buforin II is more potent than buforin I. In Bufo gargarizans (Asian toad), this protein is Histone H2A.